We begin with the raw amino-acid sequence, 231 residues long: Orotidine 5'-phosphate decarboxylase (231 aa).

Residues Asp-12, Lys-34, 61 to 70, Thr-116, Arg-177, Gln-186, Gly-206, and Arg-207 each bind substrate; that span reads DMKLLDIDNT. Lys-63 serves as the catalytic Proton donor.

The protein belongs to the OMP decarboxylase family. Type 1 subfamily. Homodimer.

The catalysed reaction is orotidine 5'-phosphate + H(+) = UMP + CO2. It participates in pyrimidine metabolism; UMP biosynthesis via de novo pathway; UMP from orotate: step 2/2. Functionally, catalyzes the decarboxylation of orotidine 5'-monophosphate (OMP) to uridine 5'-monophosphate (UMP). This is Orotidine 5'-phosphate decarboxylase from Allorhizobium ampelinum (strain ATCC BAA-846 / DSM 112012 / S4) (Agrobacterium vitis (strain S4)).